The chain runs to 360 residues: 3-dehydroquinate synthase (360 aa).

NAD(+) contacts are provided by residues 72–77 (DGEEFK), 106–110 (GVVGD), 130–131 (TT), Lys-143, Lys-152, and 170–173 (TLTT). Residues Glu-185, His-248, and His-265 each contribute to the Zn(2+) site.

Belongs to the sugar phosphate cyclases superfamily. Dehydroquinate synthase family. Requires Co(2+) as cofactor. Zn(2+) serves as cofactor. NAD(+) is required as a cofactor.

It localises to the cytoplasm. It catalyses the reaction 7-phospho-2-dehydro-3-deoxy-D-arabino-heptonate = 3-dehydroquinate + phosphate. It functions in the pathway metabolic intermediate biosynthesis; chorismate biosynthesis; chorismate from D-erythrose 4-phosphate and phosphoenolpyruvate: step 2/7. In terms of biological role, catalyzes the conversion of 3-deoxy-D-arabino-heptulosonate 7-phosphate (DAHP) to dehydroquinate (DHQ). This Geobacter metallireducens (strain ATCC 53774 / DSM 7210 / GS-15) protein is 3-dehydroquinate synthase.